Here is a 491-residue protein sequence, read N- to C-terminus: MWLRVFTAFLSFTAGACSGLKVAVPSHTVHGIRGQALYLPVHYGFHTPASDIQVIWLFERPHTMPKYLLGSVNKSVVPDLEYQHKFTMMPPNASLLINPLQFTDEGNYIVKVNIQGNGTLSASQKIQVTVDDPVTKPVVQIQPSSGAVEYVGNMTLTCLVEGGSRRVYQWLKNGRPVHTSSTNSFSLQNSSLHIAPVTKEDIGNYSCLVKNPVSRMESDIIMPTIYYGPYGLRVNSDRGLKVGEVFTVDIGEAILFDCSADSYPPNTYSWIQRTNNATYVIKHGPRLEVASEKIAQKTTDYMCCAYNNITGRRDETHFTVIITSVGIEKLAQKGKSLSPLASITGISLFLIISMCLLFLWKKFQPYKVIKQKLEGRPETEYRKARTFSGHEDALDDFGIYEFVAFPDASGVARMPARSVPACDGVPGQDLHSTIYEVIHHIPAQQQDHPESSSQDGEEDACLDRHDEAGLQELGHCKEQDKGKHSRAKQCI.

An N-terminal signal peptide occupies residues methionine 1–serine 18. 3 N-linked (GlcNAc...) asparagine glycosylation sites follow: asparagine 73, asparagine 117, and asparagine 153. Ig-like C2-type domains follow at residues proline 137–isoleucine 221 and proline 223–threonine 319. Cystine bridges form between cysteine 158–cysteine 207 and cysteine 258–cysteine 303. Asparagine 308 carries an N-linked (GlcNAc...) asparagine glycan. The chain crosses the membrane as a helical span at residues leucine 340–tryptophan 360. Over lysine 361–isoleucine 491 the chain is Cytoplasmic. Residues glutamine 444–glutamine 454 show a composition bias toward polar residues. 2 disordered regions span residues glutamine 444 to aspartate 466 and glutamate 472 to isoleucine 491. The span at glutamate 472–glycine 482 shows a compositional bias: basic and acidic residues.

In terms of processing, poly-ADP-ribosylated (PARsylated) by tankyrase TNKS during late G2 and prophase, leading to translocation to mitotic centrosomes. N-glycosylated.

Its subcellular location is the golgi apparatus membrane. It localises to the cytoplasm. It is found in the cytoskeleton. The protein resides in the spindle. The protein localises to the microtubule organizing center. Its subcellular location is the centrosome. It localises to the midbody. Its function is as follows. Required during prometaphase for centrosome maturation. Following poly-ADP-ribosylation (PARsylation) by TNKS, translocates from the Golgi apparatus to mitotic centrosomes and plays a key role in the formation of robust microtubules for prompt movement of chromosomes: anchors AKAP9/CG-NAP, a scaffold protein of the gamma-tubulin ring complex and promotes centrosome maturation. The sequence is that of HEPACAM family member 2 (HEPACAM2) from Bos taurus (Bovine).